We begin with the raw amino-acid sequence, 518 residues long: GMP synthase [glutamine-hydrolyzing] (518 aa).

Residues 8–201 form the Glutamine amidotransferase type-1 domain; the sequence is TVLIIDFGSQ…VCKISGIKNN (194 aa). The active-site Nucleophile is Cys85. Active-site residues include His175 and Glu177. Positions 202-393 constitute a GMPS ATP-PPase domain; sequence WSMAAYRDQA…LGLPEEFIKR (192 aa). 229–235 is a binding site for ATP; that stretch reads SGGVDSS.

As to quaternary structure, homodimer.

It catalyses the reaction XMP + L-glutamine + ATP + H2O = GMP + L-glutamate + AMP + diphosphate + 2 H(+). It participates in purine metabolism; GMP biosynthesis; GMP from XMP (L-Gln route): step 1/1. Its function is as follows. Catalyzes the synthesis of GMP from XMP. In Bartonella bacilliformis (strain ATCC 35685 / KC583 / Herrer 020/F12,63), this protein is GMP synthase [glutamine-hydrolyzing].